A 976-amino-acid polypeptide reads, in one-letter code: Ubiquitin ligase-binding protein BUL1 (976 aa).

Residues 1-65 are disordered; sequence MAKDLNDSGF…SPSLHSPKSW (65 aa). Residues 23-39 are compositionally biased toward polar residues; the sequence is SDFTANSSTTMNVNANT. Over residues 53–64 the composition is skewed to low complexity; it reads SSRSPSLHSPKS. Serine 58 and serine 70 each carry phosphoserine. 3 disordered regions span residues 82–124, 145–196, and 857–878; these read LAHS…DGDI, PQGN…SSST, and SEDS…ASLT. The short motif at 156 to 160 is the PY-motif element; it reads FPPSY. The segment covering 163 to 176 has biased composition (low complexity); sequence ANNSTATGAAGSSA. The span at 177 to 196 shows a compositional bias: polar residues; the sequence is DLSHQSLSTDALGATRSSST. Low complexity predominate over residues 862–878; the sequence is SHTGNGSSSSPSSASLT.

It belongs to the BUL1 family. As to quaternary structure, component of the RSP5-BUL1/2 ubiquitin ligase complex composed of at least RSP5 and BUL1 or BUL2.

It localises to the cytoplasm. It participates in protein modification; protein ubiquitination. Component of a RSP5 ubiquitin ligase complex which specifies polyubiquitination and intracellular trafficking of the general amino acid permease GAP1 as well as other permeases such as PMA1. The RSP5-BUL1/2 complex is also necessary for the heat-shock element (HSE)-mediated gene expression, nitrogen starvation GLN3-dependent transcription and pressure-induced differential regulation of the 2 tryptophan permeases TAT1 and TAT2. The sequence is that of Ubiquitin ligase-binding protein BUL1 (BUL1) from Saccharomyces cerevisiae (strain ATCC 204508 / S288c) (Baker's yeast).